The sequence spans 555 residues: Potassium-transporting ATPase potassium-binding subunit (555 aa).

10 helical membrane passes run 2-22 (IWVAVVITMLLFILVAKPTGI), 60-80 (QYALSLVLLNGFMIVVVYFIF), 130-150 (IGITFLMFAAPATTLAIVMAF), 173-193 (VFLPIAFIAALVFVALGVPQT), 246-266 (MSNILQMMLMMLLPTALPFTY), 278-298 (ILFVSLFMVFLLGFITITTSE), 374-394 (AGFVNIIMYAIIAVFISGLMV), 412-432 (LIAVTILFHPLLILGFSALAL), 483-503 (LVMFLGRYFSLITMLAVAASL), and 525-545 (GIFIGTIVIVGALTFFPMLVL).

This sequence belongs to the KdpA family. In terms of assembly, the system is composed of three essential subunits: KdpA, KdpB and KdpC.

It is found in the cell membrane. In terms of biological role, part of the high-affinity ATP-driven potassium transport (or Kdp) system, which catalyzes the hydrolysis of ATP coupled with the electrogenic transport of potassium into the cytoplasm. This subunit binds the extracellular potassium ions and delivers the ions to the membrane domain of KdpB through an intramembrane tunnel. The polypeptide is Potassium-transporting ATPase potassium-binding subunit (Bacillus mycoides (strain KBAB4) (Bacillus weihenstephanensis)).